The sequence spans 317 residues: Acetyl-coenzyme A carboxylase carboxyl transferase subunit alpha (317 aa).

Positions 40–293 constitute a CoA carboxyltransferase C-terminal domain; it reads LEKRSADALK…GDIIAASLRS (254 aa).

This sequence belongs to the AccA family. In terms of assembly, acetyl-CoA carboxylase is a heterohexamer composed of biotin carboxyl carrier protein (AccB), biotin carboxylase (AccC) and two subunits each of ACCase subunit alpha (AccA) and ACCase subunit beta (AccD).

The protein resides in the cytoplasm. It catalyses the reaction N(6)-carboxybiotinyl-L-lysyl-[protein] + acetyl-CoA = N(6)-biotinyl-L-lysyl-[protein] + malonyl-CoA. Its pathway is lipid metabolism; malonyl-CoA biosynthesis; malonyl-CoA from acetyl-CoA: step 1/1. Component of the acetyl coenzyme A carboxylase (ACC) complex. First, biotin carboxylase catalyzes the carboxylation of biotin on its carrier protein (BCCP) and then the CO(2) group is transferred by the carboxyltransferase to acetyl-CoA to form malonyl-CoA. The polypeptide is Acetyl-coenzyme A carboxylase carboxyl transferase subunit alpha (Brucella canis (strain ATCC 23365 / NCTC 10854 / RM-666)).